The following is a 71-amino-acid chain: Long neurotoxin 1 (71 aa).

Intrachain disulfides connect C3–C20, C14–C41, C26–C30, C45–C56, and C57–C62.

This sequence belongs to the three-finger toxin family. Long-chain subfamily. Type II alpha-neurotoxin sub-subfamily. In terms of tissue distribution, expressed by the venom gland.

It is found in the secreted. In terms of biological role, binds with high affinity to muscular (alpha-1/CHRNA1) and neuronal (alpha-7/CHRNA7) nicotinic acetylcholine receptor (nAChR) and inhibits acetylcholine from binding to the receptor, thereby impairing neuromuscular and neuronal transmission. The polypeptide is Long neurotoxin 1 (Naja naja (Indian cobra)).